A 510-amino-acid chain; its full sequence is Ectonucleoside triphosphate diphosphohydrolase 1 (510 aa).

At 1-16 (MEDRRESELKTFCSKN) the chain is on the cytoplasmic side. The chain crosses the membrane as a helical span at residues 17–37 (ILVILGFSSIIAVIALLALGL). At 38 to 477 (TQNKPLPENV…SSTRLSHSTY (440 aa)) the chain is on the extracellular side. A glycan (N-linked (GlcNAc...) asparagine) is linked at Asn73. Cysteines 84 and 108 form a disulfide. Glu174 functions as the Proton acceptor in the catalytic mechanism. Residues Asn245, Asn274, Asn291, and Asn333 are each glycosylated (N-linked (GlcNAc...) asparagine). Disulfide bonds link Cys255–Cys300 and Cys281–Cys324. A disulfide bridge connects residues Cys337 and Cys342. A glycan (N-linked (GlcNAc...) asparagine) is linked at Asn370. A disulfide bridge links Cys390 with Cys413. Asn457 carries an N-linked (GlcNAc...) asparagine glycan. The helical transmembrane segment at 478 to 498 (VFLMVLFSLILVIVVIIGLFV) threads the bilayer. Residues 499–510 (CHRPSYFWKDMV) lie on the Cytoplasmic side of the membrane.

It belongs to the GDA1/CD39 NTPase family. Homodimer; disulfide-linked. Ca(2+) is required as a cofactor. Mg(2+) serves as cofactor. In terms of processing, N-glycosylated. Cleaved into two polypeptides that seem to stay together by non-covalent interactions. Post-translationally, the N-terminus is blocked. In terms of processing, palmitoylated on Cys-13; which is required for caveola targeting. Highest expression found in vascular endothelium, smooth muscle, spleen and lung (at protein level). High expression also found in stomach, duodenum, kidney, lymph node and aorta (at protein level).

The protein localises to the membrane. It is found in the caveola. The enzyme catalyses a ribonucleoside 5'-triphosphate + 2 H2O = a ribonucleoside 5'-phosphate + 2 phosphate + 2 H(+). The catalysed reaction is a ribonucleoside 5'-triphosphate + H2O = a ribonucleoside 5'-diphosphate + phosphate + H(+). It catalyses the reaction a ribonucleoside 5'-diphosphate + H2O = a ribonucleoside 5'-phosphate + phosphate + H(+). It carries out the reaction ATP + 2 H2O = AMP + 2 phosphate + 2 H(+). The enzyme catalyses ATP + H2O = ADP + phosphate + H(+). The catalysed reaction is ADP + H2O = AMP + phosphate + H(+). It catalyses the reaction CTP + 2 H2O = CMP + 2 phosphate + 2 H(+). It carries out the reaction CTP + H2O = CDP + phosphate + H(+). The enzyme catalyses CDP + H2O = CMP + phosphate + H(+). The catalysed reaction is GTP + 2 H2O = GMP + 2 phosphate + 2 H(+). It catalyses the reaction GTP + H2O = GDP + phosphate + H(+). It carries out the reaction GDP + H2O = GMP + phosphate + H(+). The enzyme catalyses ITP + 2 H2O = IMP + 2 phosphate + 2 H(+). The catalysed reaction is ITP + H2O = IDP + phosphate + H(+). It catalyses the reaction IDP + H2O = IMP + phosphate + H(+). It carries out the reaction UTP + 2 H2O = UMP + 2 phosphate + 2 H(+). The enzyme catalyses UTP + H2O = UDP + phosphate + H(+). The catalysed reaction is UDP + H2O = UMP + phosphate + H(+). Its activity is regulated as follows. The ATP diphosphohydrolase activity is decreased by half by sodium azide. Catalyzes the hydrolysis of both di- and triphosphate nucleotides (NDPs and NTPs) and hydrolyze NTPs to nucleotide monophosphates (NMPs) in two distinct successive phosphate-releasing steps, with NDPs as intermediates and participates in the regulation of extracellular levels of nucleotides. By hydrolyzing proinflammatory ATP and platelet-activating ADP to AMP, it blocks platelet aggregation and supports blood flow. This is Ectonucleoside triphosphate diphosphohydrolase 1 from Sus scrofa (Pig).